Here is a 692-residue protein sequence, read N- to C-terminus: Elongation factor G (692 aa).

In terms of domain architecture, tr-type G spans E8–L282. GTP-binding positions include A17–T24, D81–H85, and N135–D138.

This sequence belongs to the TRAFAC class translation factor GTPase superfamily. Classic translation factor GTPase family. EF-G/EF-2 subfamily.

The protein resides in the cytoplasm. Functionally, catalyzes the GTP-dependent ribosomal translocation step during translation elongation. During this step, the ribosome changes from the pre-translocational (PRE) to the post-translocational (POST) state as the newly formed A-site-bound peptidyl-tRNA and P-site-bound deacylated tRNA move to the P and E sites, respectively. Catalyzes the coordinated movement of the two tRNA molecules, the mRNA and conformational changes in the ribosome. The chain is Elongation factor G from Bacillus cereus (strain ATCC 14579 / DSM 31 / CCUG 7414 / JCM 2152 / NBRC 15305 / NCIMB 9373 / NCTC 2599 / NRRL B-3711).